Consider the following 204-residue polypeptide: Spermatogenesis-associated protein 46 (204 aa).

The tract at residues 101 to 120 (SSSSQENTYPREANRKSKHG) is disordered.

In terms of tissue distribution, testis-specific.

Its subcellular location is the nucleus membrane. In terms of biological role, plays a role in spermiogenesis and fertilization. This is Spermatogenesis-associated protein 46 (Spata46) from Mus musculus (Mouse).